The chain runs to 61 residues: Large ribosomal subunit protein bL28 (61 aa).

The disordered stretch occupies residues 1 to 26 (MAKDYVTGKRTHFGNTRSHALNHSRR).

It belongs to the bacterial ribosomal protein bL28 family.

The polypeptide is Large ribosomal subunit protein bL28 (Lactiplantibacillus plantarum (strain ATCC BAA-793 / NCIMB 8826 / WCFS1) (Lactobacillus plantarum)).